The sequence spans 349 residues: Protein Wnt-7b (349 aa).

An N-terminal signal peptide occupies residues M1 to G24. Intrachain disulfides connect C73–C84, C123–C131, C133–C152, C200–C214, and C202–C209. N-linked (GlcNAc...) asparagine glycosylation is found at N83 and N127. Residue S206 is the site of O-palmitoleoyl serine; by PORCN attachment. Residues V238–T266 are disordered linker. 6 cysteine pairs are disulfide-bonded: C278/C309, C294/C304, C308/C348, C324/C339, C326/C336, and C331/C332. N-linked (GlcNAc...) asparagine glycosylation occurs at N295.

Belongs to the Wnt family. In terms of assembly, forms a soluble 1:1 complex with AFM; this prevents oligomerization and is required for prolonged biological activity. The complex with AFM may represent the physiological form in body fluids. Interacts with FZD1 and FZD10. Interacts with FZD4 (in vitro). Interacts with PORCN. Interacts with glypican GPC3. Interacts (via intrinsically disordered linker region) with RECK; interaction with RECK confers ligand selectivity for Wnt7 in brain endothelial cells and allows these cells to selectively respond to Wnt7. Post-translationally, palmitoleoylation is required for efficient binding to frizzled receptors. Depalmitoleoylation leads to Wnt signaling pathway inhibition.

The protein localises to the secreted. The protein resides in the extracellular space. It is found in the extracellular matrix. Functionally, ligand for members of the frizzled family of seven transmembrane receptors that functions in the canonical Wnt/beta-catenin signaling pathway. Required for normal fusion of the chorion and the allantois during placenta development. Required for central nervous system (CNS) angiogenesis and blood-brain barrier regulation. The chain is Protein Wnt-7b (Wnt7b) from Mus musculus (Mouse).